We begin with the raw amino-acid sequence, 147 residues long: Urease accessory protein UreE (147 aa).

It belongs to the UreE family.

It is found in the cytoplasm. Functionally, involved in urease metallocenter assembly. Binds nickel. Probably functions as a nickel donor during metallocenter assembly. This Nostoc sp. (strain PCC 7120 / SAG 25.82 / UTEX 2576) protein is Urease accessory protein UreE.